An 89-amino-acid polypeptide reads, in one-letter code: MAITKERKNEIIAEYRTHESDTGSPEVQVAVLTAEINALNTHLRTHKKDFHSERGLLKMVGRRRHLLKYLRETDVQRYRELINRLGLRR.

It belongs to the universal ribosomal protein uS15 family. As to quaternary structure, part of the 30S ribosomal subunit. Forms a bridge to the 50S subunit in the 70S ribosome, contacting the 23S rRNA.

In terms of biological role, one of the primary rRNA binding proteins, it binds directly to 16S rRNA where it helps nucleate assembly of the platform of the 30S subunit by binding and bridging several RNA helices of the 16S rRNA. Its function is as follows. Forms an intersubunit bridge (bridge B4) with the 23S rRNA of the 50S subunit in the ribosome. The chain is Small ribosomal subunit protein uS15 from Lysinibacillus sphaericus (strain C3-41).